Here is a 404-residue protein sequence, read N- to C-terminus: Proteasomal ubiquitin receptor ADRM1-A (404 aa).

Residues 17–130 enclose the Pru domain; the sequence is SSSKYLVEFR…RKLNEYLNNP (114 aa). Low complexity predominate over residues 195–247; the sequence is GSGGPTTSSSSSSSRSQSAAVTPSSTTSSTRTTSAPVAPAAAPATTPSPAVSS. Disordered regions lie at residues 195 to 258 and 376 to 404; these read GSGG…TSPT and FAKA…MSLD. Over residues 248 to 258 the composition is skewed to polar residues; that stretch reads NDGASEATSPT. Positions 278–390 constitute a DEUBAD domain; that stretch reads TGEGGQQVDL…QSTSSQKERE (113 aa). Residues 386–395 are compositionally biased toward basic and acidic residues; it reads QKERESSEKK.

This sequence belongs to the ADRM1 family. In terms of assembly, component of the 19S proteasome regulatory particle complex. The 26S proteasome consists of a 20S core particle (CP) and two 19S regulatory subunits (RP).

The protein localises to the cytoplasm. The protein resides in the nucleus. Functionally, component of the 26S proteasome, a multiprotein complex involved in the ATP-dependent degradation of ubiquitinated proteins. This complex plays a key role in the maintenance of protein homeostasis by removing misfolded or damaged proteins, which could impair cellular functions, and by removing proteins whose functions are no longer required. Therefore, the proteasome participates in numerous cellular processes, including cell cycle progression, apoptosis, or DNA damage repair. Within the complex, functions as a proteasomal ubiquitin receptor. The polypeptide is Proteasomal ubiquitin receptor ADRM1-A (adrm1-a) (Xenopus laevis (African clawed frog)).